The chain runs to 47 residues: MIAKMMEALDGERFDIIMEKTLKGMTRVMIWGCLPYFLYVLIRMFTN.

Residues 28–45 (VMIWGCLPYFLYVLIRMF) form a helical membrane-spanning segment.

It is found in the cell membrane. This is an uncharacterized protein from Bacillus subtilis (strain 168).